The chain runs to 317 residues: Ornithine carbamoyltransferase (317 aa).

Residues 57–60 (STRT), Q84, R108, and 135–138 (HPCQ) each bind carbamoyl phosphate. L-ornithine-binding positions include N166, D230, and 234-235 (SM). Carbamoyl phosphate-binding positions include 270–271 (CL) and R298.

Belongs to the aspartate/ornithine carbamoyltransferase superfamily. OTCase family. In terms of assembly, homododecamer.

It is found in the cytoplasm. The enzyme catalyses carbamoyl phosphate + L-ornithine = L-citrulline + phosphate + H(+). Its pathway is amino-acid biosynthesis; L-arginine biosynthesis; L-arginine from L-ornithine and carbamoyl phosphate: step 1/3. In terms of biological role, reversibly catalyzes the transfer of the carbamoyl group from carbamoyl phosphate (CP) to the N(epsilon) atom of ornithine (ORN) to produce L-citrulline. The sequence is that of Ornithine carbamoyltransferase from Pyrococcus horikoshii (strain ATCC 700860 / DSM 12428 / JCM 9974 / NBRC 100139 / OT-3).